Reading from the N-terminus, the 218-residue chain is Transmembrane gamma-carboxyglutamic acid protein 1 (218 aa).

Positions 1–20 (MGRVFLTGEKANSVLKRYPR) are excised as a propeptide. Positions 20-66 (RANGFFEEIRQGNIERECKEEFCTFEEAREAFENNEKTKEFWSTYTK) constitute a Gla domain. At 21-80 (ANGFFEEIRQGNIERECKEEFCTFEEAREAFENNEKTKEFWSTYTKAQQGESNRGSDWFQ) the chain is on the extracellular side. A disulfide bond links Cys37 and Cys42. The chain crosses the membrane as a helical span at residues 81-101 (FYLTFPLIFGLFIILLVIFLI). Over 102–218 (WRCFLRNKTR…PMVPVVTTIK (117 aa)) the chain is Cytoplasmic. The disordered stretch occupies residues 161–195 (TRLSNCDPPPTYEEATGQVNLQRSETEPHLDPPPE).

Gla residues are produced after subsequent post-translational modifications of glutamate by a vitamin K-dependent gamma-carboxylase.

The protein resides in the membrane. The sequence is that of Transmembrane gamma-carboxyglutamic acid protein 1 (PRRG1) from Pongo abelii (Sumatran orangutan).